The primary structure comprises 1379 residues: DNA-directed RNA polymerase subunit beta (1379 aa).

The protein belongs to the RNA polymerase beta chain family. The RNAP catalytic core consists of 2 alpha, 1 beta, 1 beta' and 1 omega subunit. When a sigma factor is associated with the core the holoenzyme is formed, which can initiate transcription.

It catalyses the reaction RNA(n) + a ribonucleoside 5'-triphosphate = RNA(n+1) + diphosphate. Functionally, DNA-dependent RNA polymerase catalyzes the transcription of DNA into RNA using the four ribonucleoside triphosphates as substrates. In Rhizobium johnstonii (strain DSM 114642 / LMG 32736 / 3841) (Rhizobium leguminosarum bv. viciae), this protein is DNA-directed RNA polymerase subunit beta.